Reading from the N-terminus, the 461-residue chain is Serine/threonine-protein kinase 4 homolog A (461 aa).

Residues 20–273 enclose the Protein kinase domain; the sequence is FTIVEKLGEG…AEELLKHPFI (254 aa). ATP-binding positions include 26–34 and Lys49; that span reads LGEGSYGSV. Residue Asp139 is the Proton acceptor of the active site. Residue Thr173 is modified to Phosphothreonine; by autocatalysis. 2 disordered regions span residues 303–349 and 369–388; these read GIEQ…EEYD and NDDEDSGTMKLKNTMPSNKK. Acidic residues predominate over residues 307–322; that stretch reads RDEEEEDEDEDSEDSD. An SARAH domain is found at 411–458; sequence SDKYSSYSLEELKKMLAELEIEREKEVQKTLEKFSINRQALLAVIDEK.

This sequence belongs to the protein kinase superfamily. STE Ser/Thr protein kinase family. STE20 subfamily. Mn(2+) serves as cofactor. In terms of processing, undergoes autophosphorylation in the catalytic domain.

It localises to the cytoplasm. The protein resides in the cytosol. It catalyses the reaction L-seryl-[protein] + ATP = O-phospho-L-seryl-[protein] + ADP + H(+). The catalysed reaction is L-threonyl-[protein] + ATP = O-phospho-L-threonyl-[protein] + ADP + H(+). Functionally, regulates both cAMP signaling during early development and the stress response. Functions as an activator of adenylylcyclase. This chain is Serine/threonine-protein kinase 4 homolog A (krsA), found in Dictyostelium discoideum (Social amoeba).